The chain runs to 427 residues: Acetyl-CoA acetyltransferase, mitochondrial (427 aa).

Residues 1-33 (MAVLAALLRGGARSRSPLLRRLVQEIRYVERSY) constitute a mitochondrion transit peptide. Position 66 is an N6-acetyllysine; alternate (K66). An N6-succinyllysine; alternate modification is found at K66. K78 is subject to N6-succinyllysine. Catalysis depends on C126, which acts as the Acyl-thioester intermediate. Residues K174, K181, K190, and K202 each carry the N6-acetyllysine; alternate modification. Residues K174, K181, K190, and K202 each carry the N6-succinyllysine; alternate modification. Y219 provides a ligand contact to CoA. Y219 is a K(+) binding site. N6-acetyllysine; alternate occurs at positions 223 and 230. 2 positions are modified to N6-succinyllysine; alternate: K223 and K230. K243 is modified (N6-succinyllysine). An N6-acetyllysine mark is found at K251 and K257. CoA-binding positions include 258-260 (RVD) and K263. K263 carries the N6-acetyllysine; alternate modification. N6-succinyllysine; alternate is present on K263. N6-succinyllysine occurs at positions 266 and 268. K273 is modified (N6-acetyllysine). K(+) contacts are provided by A280, A281, and A283. S284 is a CoA binding site. K338 is subject to N6-acetyllysine. Residue V381 coordinates K(+). C413 acts as the Proton donor/acceptor in catalysis.

The protein belongs to the thiolase-like superfamily. Thiolase family. Homotetramer. In terms of processing, succinylation at Lys-268, adjacent to a coenzyme A binding site. Desuccinylated by SIRT5.

It is found in the mitochondrion. It carries out the reaction 2 acetyl-CoA = acetoacetyl-CoA + CoA. The enzyme catalyses propanoyl-CoA + acetyl-CoA = 2-methyl-3-oxobutanoyl-CoA + CoA. Its pathway is lipid metabolism; fatty acid beta-oxidation. With respect to regulation, activated by potassium ions, but not sodium ions. Its function is as follows. This is one of the enzymes that catalyzes the last step of the mitochondrial beta-oxidation pathway, an aerobic process breaking down fatty acids into acetyl-CoA. Using free coenzyme A/CoA, catalyzes the thiolytic cleavage of medium- to long-chain 3-oxoacyl-CoAs into acetyl-CoA and a fatty acyl-CoA shortened by two carbon atoms. The activity of the enzyme is reversible and it can also catalyze the condensation of two acetyl-CoA molecules into acetoacetyl-CoA. Thereby, it plays a major role in ketone body metabolism. This is Acetyl-CoA acetyltransferase, mitochondrial (ACAT1) from Macaca fascicularis (Crab-eating macaque).